We begin with the raw amino-acid sequence, 136 residues long: Nucleoside diphosphate kinase (136 aa).

6 residues coordinate ATP: Lys10, Phe58, Arg86, Thr92, Arg104, and Asn114. Residue His117 is the Pros-phosphohistidine intermediate of the active site.

This sequence belongs to the NDK family. In terms of assembly, homotetramer. The cofactor is Mg(2+).

Its subcellular location is the cytoplasm. It carries out the reaction a 2'-deoxyribonucleoside 5'-diphosphate + ATP = a 2'-deoxyribonucleoside 5'-triphosphate + ADP. It catalyses the reaction a ribonucleoside 5'-diphosphate + ATP = a ribonucleoside 5'-triphosphate + ADP. In terms of biological role, major role in the synthesis of nucleoside triphosphates other than ATP. The ATP gamma phosphate is transferred to the NDP beta phosphate via a ping-pong mechanism, using a phosphorylated active-site intermediate. This chain is Nucleoside diphosphate kinase, found in Mycobacteroides abscessus (strain ATCC 19977 / DSM 44196 / CCUG 20993 / CIP 104536 / JCM 13569 / NCTC 13031 / TMC 1543 / L948) (Mycobacterium abscessus).